The chain runs to 341 residues: Probable cytosolic iron-sulfur protein assembly protein Ciao1 (341 aa).

WD repeat units follow at residues Gly-12–Ala-51, Gly-58–Asn-97, Gly-102–Asp-141, Gly-151–Glu-190, Ser-197–Gly-236, Tyr-255–Glu-294, and Ala-305–Asp-341.

Belongs to the WD repeat CIA1 family.

In terms of biological role, essential component of the cytosolic iron-sulfur (Fe/S) protein assembly machinery. Required for the maturation of extramitochondrial Fe/S proteins. The polypeptide is Probable cytosolic iron-sulfur protein assembly protein Ciao1 (Anopheles gambiae (African malaria mosquito)).